Consider the following 155-residue polypeptide: Deoxyuridine 5'-triphosphate nucleotidohydrolase (155 aa).

Substrate contacts are provided by residues 74–76 (RSG), N87, and 91–93 (LID).

Belongs to the dUTPase family. The cofactor is Mg(2+).

The catalysed reaction is dUTP + H2O = dUMP + diphosphate + H(+). It participates in pyrimidine metabolism; dUMP biosynthesis; dUMP from dCTP (dUTP route): step 2/2. Its function is as follows. This enzyme is involved in nucleotide metabolism: it produces dUMP, the immediate precursor of thymidine nucleotides and it decreases the intracellular concentration of dUTP so that uracil cannot be incorporated into DNA. The polypeptide is Deoxyuridine 5'-triphosphate nucleotidohydrolase (Xanthomonas oryzae pv. oryzae (strain PXO99A)).